The primary structure comprises 399 residues: Bombesin receptor subtype-3 (399 aa).

At 1-41 the chain is on the extracellular side; that stretch reads MSQKQPQSPNQTLISITNDTESSSSVVSNDTTNKGWTGDNS. N-linked (GlcNAc...) asparagine glycans are attached at residues Asn10 and Asn18. Residues 42–63 traverse the membrane as a helical segment; sequence PGIEALCAIYITYAVIISVGIL. Residues 64 to 82 are Cytoplasmic-facing; it reads GNAILIKVFFKTKSMQTVP. A helical transmembrane segment spans residues 83 to 103; that stretch reads NIFITSLALGDLLLLLTCVPV. Residues 104–121 are Extracellular-facing; it reads DATHYLAEGWLFGRIGCK. A disulfide bond links Cys120 and Cys203. Residues 122–143 form a helical membrane-spanning segment; sequence VLSFIRLTSVGVSVFTLTILSA. The Cytoplasmic segment spans residues 144–163; it reads DRYKAVVKPLERQPSNAILK. A helical membrane pass occupies residues 164 to 184; sequence TCAKAGCIWIMSMIFALPEAI. Over 185 to 220 the chain is Extracellular; that stretch reads FSNVHTLRDPNKNMTSEWCAFYPVSEKLLQEIHALL. A helical transmembrane segment spans residues 221–241; the sequence is SFLVFYIIPLSIISVYYSLIA. Residues 242–272 lie on the Cytoplasmic side of the membrane; it reads RTLYKSTLNIPTEEQSHARKQVESRKRIAKT. Residues 273–293 traverse the membrane as a helical segment; it reads VLVLVALFALCWLPNHLLNLY. At 294–313 the chain is on the extracellular side; the sequence is HSFTHKAYEDSSAIHFIVTI. A helical transmembrane segment spans residues 314–333; that stretch reads FSRVLAFSNSCVNPFALYWL. Residues 334–399 lie on the Cytoplasmic side of the membrane; the sequence is SKTFQKQFKA…RPMKKEENRV (66 aa). Cys347 is lipidated: S-palmitoyl cysteine.

It belongs to the G-protein coupled receptor 1 family. As to quaternary structure, interacts with C6orf89. As to expression, mainly in uteri of pregnant animals.

It is found in the cell membrane. Its function is as follows. Role in sperm cell division, maturation, or function. The relative order of ligand affinity is GRP = neuromedin-C &gt;&gt; neuromedin-B. This receptor mediates its action by association with G proteins that activate a phosphatidylinositol-calcium second messenger system. This chain is Bombesin receptor subtype-3 (BRS3), found in Cavia porcellus (Guinea pig).